A 523-amino-acid chain; its full sequence is BTB/POZ domain-containing protein 3 (523 aa).

Residues 85–114 (FDYSPLVLASLCGHEPVVKFLLENGALCER) form an ANK repeat. 2 consecutive BTB domains span residues 167-223 (TDIV…RYLY) and 306-373 (HDAY…DIAP).

In terms of assembly, interacts with cul3. In terms of processing, ubiquitinated and targeted for cul3-dependent degradation.

The protein resides in the cytoplasm. It functions in the pathway protein modification; protein ubiquitination. Functionally, probable substrate-specific adapter of an E3 ubiquitin-protein ligase complex which mediates the ubiquitination and subsequent proteasomal degradation of target proteins. The protein is BTB/POZ domain-containing protein 3 (btb3) of Schizosaccharomyces pombe (strain 972 / ATCC 24843) (Fission yeast).